The chain runs to 549 residues: CTP synthase (549 aa).

The amidoligase domain stretch occupies residues 1–272 (MPPKSSTTKH…DAYVVRRMDL (272 aa)). Ser19 is a CTP binding site. Ser19 contributes to the UTP binding site. ATP is bound by residues 20–25 (SLGKGL) and Asp77. Mg(2+) contacts are provided by Asp77 and Glu146. CTP contacts are provided by residues 153-155 (DIE), 193-198 (KTKPTQ), and Lys229. UTP contacts are provided by residues 193-198 (KTKPTQ) and Lys229. The region spanning 301 to 548 (VGKYIDLPDA…VKAAVERKTS (248 aa)) is the Glutamine amidotransferase type-1 domain. An L-glutamine-binding site is contributed by Gly360. Cys387 serves as the catalytic Nucleophile; for glutamine hydrolysis. L-glutamine contacts are provided by residues 388 to 391 (LGLQ), Glu411, and Arg473. Active-site residues include His521 and Glu523.

The protein belongs to the CTP synthase family. As to quaternary structure, homotetramer.

It catalyses the reaction UTP + L-glutamine + ATP + H2O = CTP + L-glutamate + ADP + phosphate + 2 H(+). The catalysed reaction is L-glutamine + H2O = L-glutamate + NH4(+). It carries out the reaction UTP + NH4(+) + ATP = CTP + ADP + phosphate + 2 H(+). It functions in the pathway pyrimidine metabolism; CTP biosynthesis via de novo pathway; CTP from UDP: step 2/2. Allosterically activated by GTP, when glutamine is the substrate; GTP has no effect on the reaction when ammonia is the substrate. The allosteric effector GTP functions by stabilizing the protein conformation that binds the tetrahedral intermediate(s) formed during glutamine hydrolysis. Inhibited by the product CTP, via allosteric rather than competitive inhibition. In terms of biological role, catalyzes the ATP-dependent amination of UTP to CTP with either L-glutamine or ammonia as the source of nitrogen. Regulates intracellular CTP levels through interactions with the four ribonucleotide triphosphates. This Streptomyces coelicolor (strain ATCC BAA-471 / A3(2) / M145) protein is CTP synthase.